The sequence spans 306 residues: Homoserine O-acetyltransferase (306 aa).

The Acyl-thioester intermediate role is filled by cysteine 142. 2 residues coordinate substrate: lysine 163 and serine 192. Residue histidine 235 is the Proton acceptor of the active site. Glutamate 237 is a catalytic residue. Arginine 249 provides a ligand contact to substrate.

It belongs to the MetA family.

The protein resides in the cytoplasm. It catalyses the reaction L-homoserine + acetyl-CoA = O-acetyl-L-homoserine + CoA. It functions in the pathway amino-acid biosynthesis; L-methionine biosynthesis via de novo pathway; O-acetyl-L-homoserine from L-homoserine: step 1/1. In terms of biological role, transfers an acetyl group from acetyl-CoA to L-homoserine, forming acetyl-L-homoserine. This is Homoserine O-acetyltransferase from Brucella abortus (strain S19).